The chain runs to 487 residues: Chromosomal replication initiator protein DnaA (487 aa).

Positions 1–71 (MMHDALFERF…TSLVQSEDPD (71 aa)) are domain I, interacts with DnaA modulators. Positions 71-141 (DVLKVEILVR…QGGSGPLFGS (71 aa)) are domain II. The interval 142–364 (PLDTRFTFDT…GAFNQLMFRR (223 aa)) is domain III, AAA+ region. Residues G188, G190, K191, and T192 each coordinate ATP. The tract at residues 365-487 (SFEPNLSVDR…LKRLINENNA (123 aa)) is domain IV, binds dsDNA.

Belongs to the DnaA family. Oligomerizes as a right-handed, spiral filament on DNA at oriC.

It localises to the cytoplasm. In terms of biological role, plays an essential role in the initiation and regulation of chromosomal replication. ATP-DnaA binds to the origin of replication (oriC) to initiate formation of the DNA replication initiation complex once per cell cycle. Binds the DnaA box (a 9 base pair repeat at the origin) and separates the double-stranded (ds)DNA. Forms a right-handed helical filament on oriC DNA; dsDNA binds to the exterior of the filament while single-stranded (ss)DNA is stabiized in the filament's interior. The ATP-DnaA-oriC complex binds and stabilizes one strand of the AT-rich DNA unwinding element (DUE), permitting loading of DNA polymerase. After initiation quickly degrades to an ADP-DnaA complex that is not apt for DNA replication. Binds acidic phospholipids. In Agrobacterium fabrum (strain C58 / ATCC 33970) (Agrobacterium tumefaciens (strain C58)), this protein is Chromosomal replication initiator protein DnaA.